A 98-amino-acid chain; its full sequence is MTAKAQHYDVIRKPIITEKATLASENGAVVFEVAIDSNKPQIKEAVEALFGVKVKAVNTTITKGKTKRFRGTPGKRKDVKKAYVTLEEGNTIDVSTGL.

Belongs to the universal ribosomal protein uL23 family. As to quaternary structure, part of the 50S ribosomal subunit. Contacts protein L29, and trigger factor when it is bound to the ribosome.

Its function is as follows. One of the early assembly proteins it binds 23S rRNA. One of the proteins that surrounds the polypeptide exit tunnel on the outside of the ribosome. Forms the main docking site for trigger factor binding to the ribosome. The polypeptide is Large ribosomal subunit protein uL23 (Dinoroseobacter shibae (strain DSM 16493 / NCIMB 14021 / DFL 12)).